Here is a 347-residue protein sequence, read N- to C-terminus: Heat-inducible transcription repressor HrcA (347 aa).

The protein belongs to the HrcA family.

Functionally, negative regulator of class I heat shock genes (grpE-dnaK-dnaJ and groELS operons). Prevents heat-shock induction of these operons. The chain is Heat-inducible transcription repressor HrcA from Lactococcus lactis subsp. cremoris (strain SK11).